The sequence spans 201 residues: Guanylate kinase (201 aa).

Residues 7 to 186 (GVLLVLSSPS…SVEEISSILN (180 aa)) enclose the Guanylate kinase-like domain. Position 14 to 21 (14 to 21 (SPSGAGKT)) interacts with ATP.

It belongs to the guanylate kinase family.

It is found in the cytoplasm. The enzyme catalyses GMP + ATP = GDP + ADP. In terms of biological role, essential for recycling GMP and indirectly, cGMP. The sequence is that of Guanylate kinase from Wolbachia pipientis wMel.